Consider the following 434-residue polypeptide: Chaperone SurA (434 aa).

Residues 1 to 22 form the signal peptide; that stretch reads MKHSKKIIFALLALAMSNTSMA. 2 PpiC domains span residues 173–274 and 283–383; these read DVEF…KVVD and VEEV…QLES.

It localises to the periplasm. It carries out the reaction [protein]-peptidylproline (omega=180) = [protein]-peptidylproline (omega=0). Chaperone involved in the correct folding and assembly of outer membrane proteins. Recognizes specific patterns of aromatic residues and the orientation of their side chains, which are found more frequently in integral outer membrane proteins. May act in both early periplasmic and late outer membrane-associated steps of protein maturation. The chain is Chaperone SurA from Shewanella frigidimarina (strain NCIMB 400).